Here is a 76-residue protein sequence, read N- to C-terminus: Protein krueppel (76 aa).

2 consecutive C2H2-type zinc fingers follow at residues 11–33 (FECS…LRLH) and 39–61 (YSCP…LRVH).

Belongs to the krueppel C2H2-type zinc-finger protein family.

It is found in the nucleus. Krueppel is a gap class segmentation protein. The chain is Protein krueppel (Kr) from Manduca sexta (Tobacco hawkmoth).